A 480-amino-acid polypeptide reads, in one-letter code: Protein nucleotidyltransferase YdiU (480 aa).

ATP-binding residues include Gly-86, Gly-88, Arg-89, Lys-109, Asp-121, Gly-122, Arg-172, and Arg-179. Asp-248 acts as the Proton acceptor in catalysis. Mg(2+)-binding residues include Asn-249 and Asp-258. Asp-258 provides a ligand contact to ATP.

The protein belongs to the SELO family. Mg(2+) serves as cofactor. It depends on Mn(2+) as a cofactor.

It catalyses the reaction L-seryl-[protein] + ATP = 3-O-(5'-adenylyl)-L-seryl-[protein] + diphosphate. The catalysed reaction is L-threonyl-[protein] + ATP = 3-O-(5'-adenylyl)-L-threonyl-[protein] + diphosphate. It carries out the reaction L-tyrosyl-[protein] + ATP = O-(5'-adenylyl)-L-tyrosyl-[protein] + diphosphate. The enzyme catalyses L-histidyl-[protein] + UTP = N(tele)-(5'-uridylyl)-L-histidyl-[protein] + diphosphate. It catalyses the reaction L-seryl-[protein] + UTP = O-(5'-uridylyl)-L-seryl-[protein] + diphosphate. The catalysed reaction is L-tyrosyl-[protein] + UTP = O-(5'-uridylyl)-L-tyrosyl-[protein] + diphosphate. In terms of biological role, nucleotidyltransferase involved in the post-translational modification of proteins. It can catalyze the addition of adenosine monophosphate (AMP) or uridine monophosphate (UMP) to a protein, resulting in modifications known as AMPylation and UMPylation. This Salmonella typhi protein is Protein nucleotidyltransferase YdiU.